The sequence spans 136 residues: Large-conductance mechanosensitive channel (136 aa).

2 helical membrane-spanning segments follow: residues 9–29 and 79–99; these read AFASRGNVIDMAVGIIIGAAF and IQTVIDFTIIAFAIFMGLKAI.

It belongs to the MscL family. Homopentamer.

It localises to the cell inner membrane. In terms of biological role, channel that opens in response to stretch forces in the membrane lipid bilayer. May participate in the regulation of osmotic pressure changes within the cell. In Shewanella sp. (strain W3-18-1), this protein is Large-conductance mechanosensitive channel.